The following is a 178-amino-acid chain: ATP-dependent protease subunit HslV (178 aa).

The active site involves threonine 5. Positions 161, 164, and 167 each coordinate Na(+).

The protein belongs to the peptidase T1B family. HslV subfamily. As to quaternary structure, a double ring-shaped homohexamer of HslV is capped on each side by a ring-shaped HslU homohexamer. The assembly of the HslU/HslV complex is dependent on binding of ATP.

It localises to the cytoplasm. The catalysed reaction is ATP-dependent cleavage of peptide bonds with broad specificity.. With respect to regulation, allosterically activated by HslU binding. In terms of biological role, protease subunit of a proteasome-like degradation complex believed to be a general protein degrading machinery. The polypeptide is ATP-dependent protease subunit HslV (Nitratiruptor sp. (strain SB155-2)).